The following is a 384-amino-acid chain: Sensor-like histidine kinase SenX3 (384 aa).

The Histidine kinase domain maps to 153 to 369; the sequence is NVSHELKTPV…TFTLSIPEYP (217 aa). At His156 the chain carries Phosphohistidine; by autocatalysis. Residues 360–384 are disordered; sequence TFTLSIPEYPDPESHSDEREDQRER. The segment covering 371–384 has biased composition (basic and acidic residues); it reads PESHSDEREDQRER.

Autophosphorylated.

It localises to the cell membrane. The enzyme catalyses ATP + protein L-histidine = ADP + protein N-phospho-L-histidine.. Member of the two-component regulatory system SenX3/RegX3 involved in stress response. The system is involved in phosphate starvation response. Probably exhibits a dual role as a phosphatase or a phosphodonor for the response regulator RegX3, depending upon phosphate availability. When environmental phosphate is abundant, SenX3 is required to maintain RegX3 in an unphosphorylated state, where it is unable to bind target DNA. Under conditions of phosphate limitation, SenX3 autophosphorylates and then transfers the phosphate group to RegX3. Probably does not itself sense phosphate concentrations, which may be relayed to SenX3 by the PstSCAB phosphate transporter system. The sequence is that of Sensor-like histidine kinase SenX3 from Mycolicibacterium smegmatis (strain ATCC 700084 / mc(2)155) (Mycobacterium smegmatis).